Consider the following 1063-residue polypeptide: Structural polyprotein (1063 aa).

The tract at residues 1-131 (MASTTPITME…LGPPTNPFQA (131 aa)) is disordered. A human C1QBP/SF2P32-binding region spans residues 30 to 69 (GASQSRRPRPPRQRDSSTSGDDSGRDSGGPRRRRGNRGRG). Ser46 carries the phosphoserine; by host modification. Residues 59-69 (PRRRRGNRGRG) show a composition bias toward basic residues. The span at 93 to 107 (APKPSRAPPQQPQPP) shows a compositional bias: pro residues. A disulfide bridge connects residues Cys153 and Cys197. Positions 279-300 (GAPQAFLAGLLLAAVAVGTARA) are functions as E2 signal peptide. Topologically, residues 301–534 (GLQPRADMAA…LWLATANALS (234 aa)) are extracellular. The tract at residues 305 to 347 (RADMAAPPAPPQPPCAHGQHYGHHHHQLPFLGHDGHHGGTLRV) is disordered. N-linked (GlcNAc...) asparagine; by host glycans are attached at residues Asn353, Asn371, Asn410, and Asn429. The helical transmembrane segment at 535–555 (LDHALAAFVLLFPWVLIFMVC) threads the bilayer. Residues 556–582 (RRACRRRGAAAALTAVVLQGYNPPAYG) lie on the Cytoplasmic side of the membrane. Residues 563 to 582 (GAAAALTAVVLQGYNPPAYG) form a functions as E1 signal peptide region. Over 583 to 1028 (EEAFTYLCTA…QTWAEWAAAH (446 aa)) the chain is Extracellular. Cystine bridges form between Cys590–Cys595, Cys619–Cys824, Cys641–Cys653, Cys699–Cys712, Cys758–Cys767, Cys807–Cys817, Cys931–Cys934, and Cys950–Cys983. Residue Asn658 is glycosylated (N-linked (GlcNAc...) asparagine; by host). 2 residues coordinate Ca(2+): Asn670 and Ala671. Residues Asp718 and Thr719 each coordinate Ca(2+). Asn759 and Asn791 each carry an N-linked (GlcNAc...) asparagine; by host glycan. O-linked (GalNAc...) threonine; by host glycans are attached at residues Thr1011 and Thr1012. The helical transmembrane segment at 1029–1049 (WWQLTLGAVCALLLAGLLACC) threads the bilayer. Over 1050–1063 (AKCLYYLRGAIAPR) the chain is Extracellular.

In terms of assembly, homodimer; further assembles into homooligomer. Interacts with human C1QBP. Interacts (via N-terminus) with protease/methyltransferase p150. As to quaternary structure, heterodimer with spike glycoprotein E2. Heterodimer with spike glycoprotein E1. In terms of processing, structural polyprotein: Specific enzymatic cleavages in vivo yield mature proteins. Two signal peptidase-mediated cleavages within the polyprotein produce the structural proteins capsid, E2, and E1. The E2 signal peptide remains attached to the C-terminus of the capsid protein after cleavage by the signal peptidase. Another signal peptide at E2 C-terminus directs E1 to the ER, with a similar mechanism. Post-translationally, contains three N-linked oligosaccharides. Capsid is phosphorylated on Ser-46 by host. This phosphorylation negatively regulates capsid protein RNA-binding activity. Dephosphorylated by human PP1A.

Its subcellular location is the virion. It is found in the host cytoplasm. The protein resides in the host mitochondrion. It localises to the virion membrane. The protein localises to the host Golgi apparatus membrane. Functionally, capsid protein interacts with genomic RNA and assembles into icosahedric core particles 65-70 nm in diameter. The resulting nucleocapsid eventually associates with the cytoplasmic domain of E2 at the cell membrane, leading to budding and formation of mature virions from host Golgi membranes. Phosphorylation negatively regulates RNA-binding activity, possibly delaying virion assembly during the viral replication phase. Capsid protein dimerizes and becomes disulfide-linked in the virion. Modulates genomic RNA replication. Modulates subgenomic RNA synthesis by interacting with human C1QBP/SF2P32. Induces both perinuclear clustering of mitochondria and the formation of electron-dense intermitochondrial plaques, both hallmarks of rubella virus infected cells. Induces apoptosis when expressed in transfected cells. Its function is as follows. Responsible for viral attachment to target host cell, by binding to the cell receptor. Its transport to the plasma membrane depends on interaction with E1 protein. The surface glycoproteins display an irregular helical organization and a pseudo-tetrameric inner nucleocapsid arrangement. Class II viral fusion protein. Fusion activity is inactive as long as E1 is bound to E2 in mature virion. After virus attachment to target cell and clathrin-mediated endocytosis, acidification of the endosome would induce dissociation of E1/E2 heterodimer and concomitant trimerization of the E1 subunits. This E1 homotrimer is fusion active, and promotes release of viral nucleocapsid in cytoplasm after endosome and viral membrane fusion. The cytoplasmic tail of spike glycoprotein E1 modulates virus release. The surface glycoproteins display an irregular helical organization and a pseudo-tetrameric inner nucleocapsid arrangement. This is Structural polyprotein from Rubella virus (strain RN-UK86) (RUBV).